Consider the following 395-residue polypeptide: Cuticlin-5 (395 aa).

The signal sequence occupies residues 1 to 18 (MNFILAVFAIILLQAVRG). Topologically, residues 19-358 (EIDNAIVGDP…ELCMTAIGTT (340 aa)) are extracellular. Residues 46 to 291 (SCVGNFIIKV…DYCDVPSCPD (246 aa)) form the ZP domain. 2 N-linked (GlcNAc...) asparagine glycosylation sites follow: N90 and N307. Residues 359–379 (LLVFLNAFLFIISLVSIVHVC) traverse the membrane as a helical segment. The Cytoplasmic portion of the chain corresponds to 380 to 395 (CFRTSPKLEKTKSTML).

It is found in the cell membrane. Plays a role in alae formation in L1 and dauer stage larvae. The chain is Cuticlin-5 from Caenorhabditis elegans.